The primary structure comprises 125 residues: Outer membrane protein assembly factor BamE (125 aa).

The signal sequence occupies residues 1–17 (MNKTLILALSALLGLAA). Cys18 carries the N-palmitoyl cysteine lipid modification. Cys18 carries S-diacylglycerol cysteine lipidation.

This sequence belongs to the BamE family. As to quaternary structure, part of the Bam complex.

The protein localises to the cell outer membrane. Part of the outer membrane protein assembly complex, which is involved in assembly and insertion of beta-barrel proteins into the outer membrane. The polypeptide is Outer membrane protein assembly factor BamE (Neisseria meningitidis serogroup B (strain ATCC BAA-335 / MC58)).